Here is a 360-residue protein sequence, read N- to C-terminus: Decorin (360 aa).

The N-terminal stretch at 1–16 (MKATIIFLLLAQVSWA) is a signal peptide. The propeptide occupies 17–30 (GPFQQRGLFDFMLE). Serine 34 is a glycosylation site (O-linked (Xyl...) (glycosaminoglycan) serine). Disulfide bonds link cysteine 55/cysteine 61 and cysteine 59/cysteine 68. LRR repeat units lie at residues 74 to 94 (DKVPKDLPPDTTLLDLQNNKI), 95 to 118 (TEIKDGDFKNLKNLHALILVNNKI), 119 to 142 (SKISPGAFTPLVKLERLYLSKNHL), 143 to 163 (KELPEKMPKTLQELRVHENEI), 164 to 187 (TKVRKAVFNGLNQMIVVELGTNPL), 188 to 213 (KSSGIENGAFQGMKKLSYIRIADTNI), 214 to 234 (TTIPPGLPPSLTELHLDGNKI), 235 to 258 (TKVDAASLRGLNNLAKLGLSFNSI), 259 to 282 (SAVDNGSLANTPHLRELHLDNNKL), 283 to 305 (IKVPGGLADHKYIQVVYLHNNNI), 306 to 335 (SAVGSNDFCPPGYNTKKASYSGVSLFSNPV), and 336 to 360 (QYWEIQPSTFRCVYVRSAIQLGNYK). N-linked (GlcNAc...) asparagine glycosylation occurs at asparagine 212. N-linked (GlcNAc...) asparagine glycans are attached at residues asparagine 263 and asparagine 304. An intrachain disulfide couples cysteine 314 to cysteine 347.

This sequence belongs to the small leucine-rich proteoglycan (SLRP) family. SLRP class I subfamily. Binds to type I and type II collagen, fibronectin and TGF-beta. Forms a ternary complex with MFAP2 and ELN. Interacts with DPT. Post-translationally, the attached glycosaminoglycan chain can be either chondroitin sulfate or dermatan sulfate depending upon the tissue of origin.

The protein resides in the secreted. The protein localises to the extracellular space. It localises to the extracellular matrix. Its function is as follows. May affect the rate of fibrils formation. This is Decorin (DCN) from Equus caballus (Horse).